A 131-amino-acid chain; its full sequence is Protein TIFY 5A (131 aa).

The short motif at 9-13 (LELRL) is the EAR element. Disordered stretches follow at residues 14-44 (FPTS…EESQ) and 74-131 (REMK…HSRR). Positions 16–34 (TSYDSDSSDTTSVVESTSS) are enriched in low complexity. Residues 39-74 (PNEESQRITIFYNGKMCFSSDVTHLQARSIISIASR) enclose the Tify domain. A compositionally biased stretch (polar residues) spans 79-100 (KSSSNGSDPPNKSTSFHHNQLP). Positions 105–127 (SMKKSLQSFLQKRKIRIQATSPY) match the Jas motif. The Nuclear localization signal motif lies at 106–113 (MKKSLQSF). Over residues 122-131 (QATSPYHSRR) the composition is skewed to polar residues.

It belongs to the TIFY/JAZ family. As to quaternary structure, interacts with TPL and weakly with COI1, but not with AFPH2/NINJA. Interacts with MYC2, MYB21, MYB24, TIFY10A/JAZ1, TIFY10B/JAZ2, TIFY6B/JAZ3, TIFY6A/JAZ4, TIFY11A/JAZ5, TIFY11B/JAZ6, TIFY7/JAZ9, TIFY9/JAZ10 and TIFY3B/JAZ12. Interacts with RHD6 and RSL1. In terms of assembly, (Microbial infection) Interacts with the pathogenic Pseudomonas syringae HopZ1a protein. In terms of processing, (Microbial infection) Acetylated by Pseudomonas syringae HopZ1a. Post-translationally, ubiquitinated.

The protein resides in the nucleus. Functionally, repressor of jasmonate responses. Unable to associate strongly with COI1 in the presence of jasmonoyl-isoleucine (JA-Ile) and is therefore more resistant to JA-mediated-degradation than other TIFY/JAZ proteins. Repress gene expression through direct recruitment of the corepressor TOPLESS to cognate transcription factors. Interacts with and suppresses RHD6 and RSL1 transcription factor activities to negatively regulate jasmonate-stimulated root hair development. This chain is Protein TIFY 5A, found in Arabidopsis thaliana (Mouse-ear cress).